Consider the following 914-residue polypeptide: Chlorate reductase subunit alpha (914 aa).

The tat-type signal signal peptide spans 1-32; it reads MNSPDEHNGRRRFLQFSAAALASAAASPSLWA. The 4Fe-4S Mo/W bis-MGD-type domain maps to 62–125; that stretch reads DSVGVMTHSN…VYCSWSKQPD (64 aa). [4Fe-4S] cluster contacts are provided by His-69, Cys-73, Cys-77, and Cys-111. Asp-205 contributes to the Mo-bis(molybdopterin guanine dinucleotide) binding site.

The protein belongs to the prokaryotic molybdopterin-containing oxidoreductase family. As to quaternary structure, heterotrimer of alpha, beta and gamma subunits. Requires [4Fe-4S] cluster as cofactor. The cofactor is Mo-bis(molybdopterin guanine dinucleotide). In terms of processing, predicted to be exported by the Tat system. The position of the signal peptide cleavage has not been experimentally proven.

The protein resides in the periplasm. It catalyses the reaction chlorate + AH2 = chlorite + A + H2O. Functionally, terminal reductase that allows anaerobic growth on chlorate as the sole respiratory oxidant. The polypeptide is Chlorate reductase subunit alpha (clrA) (Ideonella dechloratans).